Here is a 544-residue protein sequence, read N- to C-terminus: Chaperonin GroEL (544 aa).

ATP-binding positions include 29-32, 86-90, G413, 476-478, and D492; these read TLGP, DGTTT, and NAL.

The protein belongs to the chaperonin (HSP60) family. In terms of assembly, forms a cylinder of 14 subunits composed of two heptameric rings stacked back-to-back. Interacts with the co-chaperonin GroES.

The protein resides in the cytoplasm. It carries out the reaction ATP + H2O + a folded polypeptide = ADP + phosphate + an unfolded polypeptide.. Together with its co-chaperonin GroES, plays an essential role in assisting protein folding. The GroEL-GroES system forms a nano-cage that allows encapsulation of the non-native substrate proteins and provides a physical environment optimized to promote and accelerate protein folding. The chain is Chaperonin GroEL from Desulfitobacterium hafniense (strain Y51).